A 273-amino-acid chain; its full sequence is Kit ligand (273 aa).

The first 25 residues, 1 to 25 (MKKTQTWILTCIYLQLLLFNPLVKT), serve as a signal peptide directing secretion. Residues 26–214 (EGICRNRVTN…KNPPGDSSLH (189 aa)) are Extracellular-facing. Cystine bridges form between Cys29–Cys114 and Cys68–Cys163. 2 N-linked (GlcNAc...) asparagine; partial glycosylation sites follow: Asn90 and Asn118. An N-linked (GlcNAc...) asparagine glycan is attached at Asn145. An O-linked (GalNAc...) serine glycan is attached at Ser167. O-linked (GalNAc...) threonine glycans are attached at residues Thr168 and Thr180. N-linked (GlcNAc...) asparagine glycosylation occurs at Asn195. A helical membrane pass occupies residues 215 to 237 (WAAMALPALFSLIIGFAFGALYW). The Cytoplasmic portion of the chain corresponds to 238-273 (KKRQPSLTRAVENIQINEEDNEISMLQEKEREFQEV).

The protein belongs to the SCF family. As to quaternary structure, homodimer, non-covalently linked. Heterotetramer with KIT, binding two KIT molecules; thereby mediates KIT dimerization and subsequent activation by autophosphorylation. Post-translationally, a soluble form (sKITLG) is produced by proteolytic processing of isoform 1 in the extracellular domain. In terms of processing, found in two differentially glycosylated forms, LMW-SCF and HMW-SCF. LMW-SCF is fully N-glycosylated at Asn-145, partially N-glycosylated at Asn-90, O-glycosylated at Ser-167, Thr-168 and Thr-180, and not glycosylated at Asn-97 or Asn-118. HMW-SCF is N-glycosylated at Asn-118, Asn-90 and Asn-145, O-glycosylated at Ser-167, Thr-168 and Thr-180, and not glycosylated at Asn-97. A soluble form exists as a cleavage product of the extracellular domain.

It localises to the cell membrane. Its subcellular location is the cytoplasm. The protein localises to the cytoskeleton. It is found in the cell projection. The protein resides in the lamellipodium. It localises to the filopodium. Its subcellular location is the secreted. Functionally, ligand for the receptor-type protein-tyrosine kinase KIT. Plays an essential role in the regulation of cell survival and proliferation, hematopoiesis, stem cell maintenance, gametogenesis, mast cell development, migration and function, and in melanogenesis. KITLG/SCF binding can activate several signaling pathways. Promotes phosphorylation of PIK3R1, the regulatory subunit of phosphatidylinositol 3-kinase, and subsequent activation of the kinase AKT1. KITLG/SCF and KIT also transmit signals via GRB2 and activation of RAS, RAF1 and the MAP kinases MAPK1/ERK2 and/or MAPK3/ERK1. KITLG/SCF and KIT promote activation of STAT family members STAT1, STAT3 and STAT5. KITLG/SCF and KIT promote activation of PLCG1, leading to the production of the cellular signaling molecules diacylglycerol and inositol 1,4,5-trisphosphate. KITLG/SCF acts synergistically with other cytokines, probably interleukins. The chain is Kit ligand from Homo sapiens (Human).